Consider the following 1496-residue polypeptide: MNELMKIFGQVSGTQSFDQIRISIASPERIRSWSYGEIKKPETINYRTFKPERDGLFCARIFGPIKDYECLCGKYKRMKYRGIICEKCGVEVTLAKVRRERMGHIELASPVAHIWFLKSLPSRIGLLCDMTLKDLERILYFENYVVVEPGLTPLKIRELLTEEQYMRAVDEYGEDAFTAKIGAEAIRDMLTVIDLETEKAQLKVDLKETTSEAKRKKLVKRMKLVEAFMESGSRPEWMILEVIPVIPPELRPLVPLDGGRFATSDLNDLYRRVINRNNRLKRLIELRAPEIIVRNEKRMLQEAVDALFDNGRRGRAITGANKRPLKSLSDMLKGKQGRFRQNLLGKRVDYSGRSVIVVGPELKLHQCGLPKKMALELFKPFVYSKLELYGMATTIKAAKRMVEKERPEVWDILEEVIREHPVMLNRAPTLHRLGIQAFEPVLIEGKAIQLHPLVCTAFNADFDGDQMAVHVPLSLEAQLEARVLMMSTNNILSPANGKPIIVPSQDIVLGIYYITMERDEVPGQVLKIRSMDELKGAIANNAILFYCPTDPNTKIDTKDLDTLLDRLASRNVTAHRRVNPSSKDALEAGLKGGHLRLFNVEKPGVPLVFADVNDAEKAIKDGKAILFKVPVFVNMAEIEEALTEKTITLHTKIRARFDTVDSEGTPVTQIVDTTPGRMMLSVILPKNKNVPFSLINRLLTKKEIQNVIDVVYRHCGQKETVIFADRVMGLGYSNAFKAGISFGKDDLVIPPEKETLVGETEEKAKEYEQQYQDGLITQGEKYNKVVDAWSKCTDDVADAMMKQISSLVPGKQINSIYMMAHSGARGSAAQMKQLAGMRGLMAKPSGEIIETPIISNFKEGLTVLEYFNSTHGARKGLADTALKTANSGYLTRRLVDVAQDAIICEEDCGTTNGLTVSPVIEGGEVIASLAERILGRSAARDIVNPLTGEVIVKAAQMIQETEVELIDAAGIETVVIRSVLTCDSEEGVCGSCYGRDLARGTRVNVGEAVGVIAAQSIGEPGTQLTMRTFHIGGAAQRGAEQSSIEATFDGTVQVINRNVVVNSSGASIVMSRNCEVALLDINNRERARHRVPYGAKLLVDEAQKVTKGTKLAEWDPYTLPIITERAGVAHYVDLTEGLSMREVVDEATGIASKVVVDWKQQPRGADLRPRVTLRDEKGEELLLANGLEARYFMSVDAILSVENNTKVNAGDVLARIPRESSKTRDITGGLPRVAELFEARKPKDHAIISDCDGRVEFGKDYKSKRRILVVPEEGDAIEYLIPKGKHISVQEGDYVRRGDPLMDGNPVPHDILKVLGVEALAQYLINEIQEVYRLQGVKINDKHIEVIVRQMLQKVEITDPGDTTLLVGEQVDRVEFDIENSKAIREQGRPASGTPVLQGITKASLQTHSFISAASFQETTRVLTEAAVSGKVDSLQGLKENVIVGRLIPAGTGAVMNRLRAIAAKRDKDMQVEGESEVPAIPPVAEGSAPEAPPAE.

The Zn(2+) site is built by Cys70, Cys72, Cys85, and Cys88. Mg(2+)-binding residues include Asp461, Asp463, and Asp465. Positions 908, 982, 989, and 992 each coordinate Zn(2+). A disordered region spans residues 1467–1496 (DKDMQVEGESEVPAIPPVAEGSAPEAPPAE).

It belongs to the RNA polymerase beta' chain family. The RNAP catalytic core consists of 2 alpha, 1 beta, 1 beta' and 1 omega subunit. When a sigma factor is associated with the core the holoenzyme is formed, which can initiate transcription. Mg(2+) is required as a cofactor. Zn(2+) serves as cofactor.

It catalyses the reaction RNA(n) + a ribonucleoside 5'-triphosphate = RNA(n+1) + diphosphate. In terms of biological role, DNA-dependent RNA polymerase catalyzes the transcription of DNA into RNA using the four ribonucleoside triphosphates as substrates. The protein is DNA-directed RNA polymerase subunit beta' of Paramagnetospirillum magneticum (strain ATCC 700264 / AMB-1) (Magnetospirillum magneticum).